Consider the following 87-residue polypeptide: Exodeoxyribonuclease 7 small subunit (87 aa).

This sequence belongs to the XseB family. As to quaternary structure, heterooligomer composed of large and small subunits.

It localises to the cytoplasm. It carries out the reaction Exonucleolytic cleavage in either 5'- to 3'- or 3'- to 5'-direction to yield nucleoside 5'-phosphates.. In terms of biological role, bidirectionally degrades single-stranded DNA into large acid-insoluble oligonucleotides, which are then degraded further into small acid-soluble oligonucleotides. This chain is Exodeoxyribonuclease 7 small subunit, found in Xanthomonas campestris pv. campestris (strain 8004).